The primary structure comprises 148 residues: UPF0756 membrane protein CKO_01811 (148 aa).

4 helical membrane-spanning segments follow: residues 14 to 34 (ALGF…LIIV), 51 to 71 (LTVG…SGSL), 86 to 106 (LVAI…VTLM), and 121 to 141 (VLGV…AGLV).

The protein belongs to the UPF0756 family.

It is found in the cell membrane. In Citrobacter koseri (strain ATCC BAA-895 / CDC 4225-83 / SGSC4696), this protein is UPF0756 membrane protein CKO_01811.